A 342-amino-acid chain; its full sequence is Pyrophosphate--fructose 6-phosphate 1-phosphotransferase (342 aa).

Gly10 contributes to the diphosphate binding site. Mg(2+) is bound at residue Glu103. Residues 126–128 (TID), Arg163, 170–172 (MGR), Glu222, Arg266, and 272–275 (HVQR) each bind substrate. The Proton acceptor role is filled by Asp128.

This sequence belongs to the phosphofructokinase type A (PFKA) family. Mixed-substrate PFK group III subfamily. Homodimer or homotetramer. It depends on Mg(2+) as a cofactor.

It localises to the cytoplasm. It catalyses the reaction beta-D-fructose 6-phosphate + diphosphate = beta-D-fructose 1,6-bisphosphate + phosphate + H(+). The protein operates within carbohydrate degradation; glycolysis; D-glyceraldehyde 3-phosphate and glycerone phosphate from D-glucose: step 3/4. With respect to regulation, non-allosteric. Its function is as follows. Catalyzes the phosphorylation of D-fructose 6-phosphate, the first committing step of glycolysis. Uses inorganic phosphate (PPi) as phosphoryl donor instead of ATP like common ATP-dependent phosphofructokinases (ATP-PFKs), which renders the reaction reversible, and can thus function both in glycolysis and gluconeogenesis. Consistently, PPi-PFK can replace the enzymes of both the forward (ATP-PFK) and reverse (fructose-bisphosphatase (FBPase)) reactions. The sequence is that of Pyrophosphate--fructose 6-phosphate 1-phosphotransferase from Streptomyces coelicolor (strain ATCC BAA-471 / A3(2) / M145).